Reading from the N-terminus, the 188-residue chain is GTP cyclohydrolase 1 (188 aa).

Residues Cys-78, His-81, and Cys-150 each contribute to the Zn(2+) site.

It belongs to the GTP cyclohydrolase I family. As to quaternary structure, toroid-shaped homodecamer, composed of two pentamers of five dimers.

It catalyses the reaction GTP + H2O = 7,8-dihydroneopterin 3'-triphosphate + formate + H(+). Its pathway is cofactor biosynthesis; 7,8-dihydroneopterin triphosphate biosynthesis; 7,8-dihydroneopterin triphosphate from GTP: step 1/1. The protein is GTP cyclohydrolase 1 of Geobacillus kaustophilus (strain HTA426).